Consider the following 247-residue polypeptide: Carboxy-S-adenosyl-L-methionine synthase (247 aa).

S-adenosyl-L-methionine contacts are provided by residues Tyr40, 65–67, 90–91, 122–123, Asn137, and Arg204; these read GCS, DN, and DI.

Belongs to the class I-like SAM-binding methyltransferase superfamily. Cx-SAM synthase family. In terms of assembly, homodimer.

It catalyses the reaction prephenate + S-adenosyl-L-methionine = carboxy-S-adenosyl-L-methionine + 3-phenylpyruvate + H2O. Functionally, catalyzes the conversion of S-adenosyl-L-methionine (SAM) to carboxy-S-adenosyl-L-methionine (Cx-SAM). The protein is Carboxy-S-adenosyl-L-methionine synthase of Pseudomonas syringae pv. tomato (strain ATCC BAA-871 / DC3000).